Consider the following 70-residue polypeptide: Neuropeptide SIFamide (70 aa).

Positions 1–22 (MRFIVALCLFAIVMCIIHKAEG) are cleaved as a signal peptide. The residue at position 34 (Phe34) is a Phenylalanine amide. Positions 38–70 (GVVEYDTTGRALSALCEIASETCQAWYQTLENK) are excised as a propeptide.

Expressed in antennal lobe (AL) and gnathal ganglion (GNG) with expression detected in most animals (at protein level). Not expressed in corpora cardiaca (CC) and corpora allata (CA) (at protein level).

Its subcellular location is the secreted. Its function is as follows. Ligand for the neuropeptide SIFamide receptor. The polypeptide is Neuropeptide SIFamide (Agrotis ipsilon (Black cutworm moth)).